The sequence spans 70 residues: Conotoxin Im23.3 (70 aa).

The signal sequence occupies residues 1-22; sequence MIMRMTLTLFVLVVMTAASASG. The propeptide occupies 23 to 28; it reads DALTEA. 3 disulfides stabilise this stretch: Cys-34-Cys-41, Cys-45-Cys-53, and Cys-54-Cys-69.

The protein belongs to the conotoxin K superfamily. Expressed by the venom duct.

Its subcellular location is the secreted. Its function is as follows. Neurotoxin that induces excitatory symptoms in mice following intracranial administration. No symptoms are observed after intraperitoneal and intravenous (tail vein) injections. The protein is Conotoxin Im23.3 of Conus imperialis (Imperial cone).